The sequence spans 66 residues: Truncated interferon antagonist OPG039 (66 aa).

An ANK repeat occupies 29–58; the sequence is HGHSALYYAIADNNMRLVCTLLNAGALKNL.

The protein belongs to the orthopoxvirus OPG039 family.

The protein is Truncated interferon antagonist OPG039 (OPG040) of Homo sapiens (Human).